The sequence spans 201 residues: Small ribosomal subunit protein uS4 (201 aa).

The region spanning 91–151 (SRLDNVVYRA…EKSQKMNWFE (61 aa)) is the S4 RNA-binding domain.

Belongs to the universal ribosomal protein uS4 family. In terms of assembly, part of the 30S ribosomal subunit. Contacts protein S5. The interaction surface between S4 and S5 is involved in control of translational fidelity.

In terms of biological role, one of the primary rRNA binding proteins, it binds directly to 16S rRNA where it nucleates assembly of the body of the 30S subunit. With S5 and S12 plays an important role in translational accuracy. The chain is Small ribosomal subunit protein uS4 from Corynebacterium efficiens (strain DSM 44549 / YS-314 / AJ 12310 / JCM 11189 / NBRC 100395).